A 54-amino-acid polypeptide reads, in one-letter code: Ovomucoid (54 aa).

A Kazal-like domain is found at 4–54; it reads VDCSDYPKPVCTLDYMPLCGSDNKTYSNKCNFCNAVVDSNGTITLSHFGRC. 3 disulfides stabilise this stretch: Cys6/Cys36, Cys14/Cys33, and Cys22/Cys54. N-linked (GlcNAc...) asparagine glycosylation occurs at Asn43.

It is found in the secreted. This chain is Ovomucoid, found in Coloeus monedula (Eurasian jackdaw).